The following is a 162-amino-acid chain: MQEISIKFKLTNEEINAIENQKKYYEDFRAISIEALKIVQKKRGWVSDQAIYAIAEILHINPSDVEGVATFYSQIFRKPVGRNIIRYCDSVVCFLTGYKRIQIALENYLKIKIGETTKDDRFTLLPVCCLGNCDKGPTIMINEDTYSVLTPESIPSLLESYK.

Residues cysteine 88, cysteine 93, cysteine 129, and cysteine 133 each coordinate [2Fe-2S] cluster.

It belongs to the complex I 24 kDa subunit family. Composed of 13 different subunits. Subunits NuoCD, E, F, and G constitute the peripheral sector of the complex. [2Fe-2S] cluster serves as cofactor.

The catalysed reaction is a quinone + NADH + 5 H(+)(in) = a quinol + NAD(+) + 4 H(+)(out). Its function is as follows. NDH-1 shuttles electrons from NADH, via FMN and iron-sulfur (Fe-S) centers, to quinones in the respiratory chain. Couples the redox reaction to proton translocation (for every two electrons transferred, four hydrogen ions are translocated across the cytoplasmic membrane), and thus conserves the redox energy in a proton gradient. This is NADH-quinone oxidoreductase subunit E (nuoE) from Buchnera aphidicola subsp. Acyrthosiphon pisum (strain APS) (Acyrthosiphon pisum symbiotic bacterium).